The primary structure comprises 132 residues: Small ribosomal subunit protein uS8 (132 aa).

Belongs to the universal ribosomal protein uS8 family. In terms of assembly, part of the 30S ribosomal subunit. Contacts proteins S5 and S12.

Its function is as follows. One of the primary rRNA binding proteins, it binds directly to 16S rRNA central domain where it helps coordinate assembly of the platform of the 30S subunit. The polypeptide is Small ribosomal subunit protein uS8 (Geobacter metallireducens (strain ATCC 53774 / DSM 7210 / GS-15)).